The primary structure comprises 408 residues: Cell division protein FtsZ 2 (408 aa).

GTP-binding positions include 130–132 (GTG), Glu-169, Arg-173, and Asp-216.

It belongs to the FtsZ family. In terms of assembly, homodimer. Polymerizes to form a dynamic ring structure in a strictly GTP-dependent manner. Interacts directly with several other division proteins.

It is found in the cytoplasm. In terms of biological role, essential cell division protein that forms a contractile ring structure (Z ring) at the future cell division site. The regulation of the ring assembly controls the timing and the location of cell division. One of the functions of the FtsZ ring is to recruit other cell division proteins to the septum to produce a new cell wall between the dividing cells. Binds GTP and shows GTPase activity. The polypeptide is Cell division protein FtsZ 2 (Pyrococcus furiosus (strain ATCC 43587 / DSM 3638 / JCM 8422 / Vc1)).